The following is an 824-amino-acid chain: Phenylalanine--tRNA ligase beta subunit (824 aa).

The tRNA-binding domain maps to 39–153 (SEQAKNVVIG…NIPPIGSNAV (115 aa)). The B5 domain occupies 414 to 507 (KKSISVNLRM…RLIGYDNFDS (94 aa)). Aspartate 485, aspartate 491, glutamate 494, and glutamate 495 together coordinate Mg(2+). The region spanning 730–823 (PTVPYMERDI…LKEKIKAELR (94 aa)) is the FDX-ACB domain.

The protein belongs to the phenylalanyl-tRNA synthetase beta subunit family. Type 1 subfamily. As to quaternary structure, tetramer of two alpha and two beta subunits. Mg(2+) is required as a cofactor.

The protein localises to the cytoplasm. The catalysed reaction is tRNA(Phe) + L-phenylalanine + ATP = L-phenylalanyl-tRNA(Phe) + AMP + diphosphate + H(+). This is Phenylalanine--tRNA ligase beta subunit from Prochlorococcus marinus (strain NATL2A).